The chain runs to 96 residues: Small ribosomal subunit protein bS6 (96 aa).

It belongs to the bacterial ribosomal protein bS6 family.

Its function is as follows. Binds together with bS18 to 16S ribosomal RNA. The sequence is that of Small ribosomal subunit protein bS6 from Streptococcus suis (strain 98HAH33).